The chain runs to 360 residues: Phospho-N-acetylmuramoyl-pentapeptide-transferase (360 aa).

10 helical membrane-spanning segments follow: residues 21 to 41 (YLTL…FIVG), 70 to 90 (GTPT…TLLW), 97 to 117 (YVWA…VDDY), 134 to 154 (YLWQ…TASS), 168 to 188 (VVLN…VGSS), 199 to 219 (GLAI…AYAS), 236 to 256 (AGEL…FLWF), 263 to 283 (VFMG…VAVL), 288 to 308 (IVLM…MLQV), and 338 to 358 (VIVR…ATLK).

Belongs to the glycosyltransferase 4 family. MraY subfamily. The cofactor is Mg(2+).

It localises to the cell inner membrane. It catalyses the reaction UDP-N-acetyl-alpha-D-muramoyl-L-alanyl-gamma-D-glutamyl-meso-2,6-diaminopimeloyl-D-alanyl-D-alanine + di-trans,octa-cis-undecaprenyl phosphate = di-trans,octa-cis-undecaprenyl diphospho-N-acetyl-alpha-D-muramoyl-L-alanyl-D-glutamyl-meso-2,6-diaminopimeloyl-D-alanyl-D-alanine + UMP. Its pathway is cell wall biogenesis; peptidoglycan biosynthesis. In terms of biological role, catalyzes the initial step of the lipid cycle reactions in the biosynthesis of the cell wall peptidoglycan: transfers peptidoglycan precursor phospho-MurNAc-pentapeptide from UDP-MurNAc-pentapeptide onto the lipid carrier undecaprenyl phosphate, yielding undecaprenyl-pyrophosphoryl-MurNAc-pentapeptide, known as lipid I. The polypeptide is Phospho-N-acetylmuramoyl-pentapeptide-transferase (Methylococcus capsulatus (strain ATCC 33009 / NCIMB 11132 / Bath)).